The primary structure comprises 451 residues: MVVVAILAAGRGTRMKSDLPKVLHPLGGRSLVERVIDSVEPLSPSRRLVIVGYQAEQVKTGLQSLHLEFVEQTVQLGTGHAIQQLLPHLEGYTGDLLVLNGDVPLLRTQTLEQLLQTHQTNQNAATILTSHLPNPKGYGRVFCNGNNIVQQIVEDKDCSPAQRQNHRINAGIYCFRWENLAQVLPHLEANNAQKEYYLTDAVTQVGQVMAVDVEDYQEILGINDRLQLATAYEILQRRVKEQWMMAGVTLIDPNSITIDDTVDLQPDVIIEPQTHLRGNTFIQTGSRIGPGSLIENSQLGANVTVQYSVITDSTIQNGAKIGPYAHLRGHAQVGANCRIGNFVELKNTELGDRTNVAHLSYLGDATAGTQVNIGAGTITANYDGVKKHRTKIGDRTKTGSNSVLVAPVTLGDDVYVAAGSTITEDVPNDSLVIARTRQVVKPGWRKKSGES.

The segment at 1 to 225 is pyrophosphorylase; it reads MVVVAILAAG…YQEILGINDR (225 aa). UDP-N-acetyl-alpha-D-glucosamine-binding positions include 7–10, lysine 21, glutamine 72, and 77–78; these read LAAG and GT. Residue aspartate 102 coordinates Mg(2+). Positions 139, 154, 169, and 223 each coordinate UDP-N-acetyl-alpha-D-glucosamine. Asparagine 223 is a binding site for Mg(2+). The tract at residues 226-246 is linker; sequence LQLATAYEILQRRVKEQWMMA. Residues 247-451 form an N-acetyltransferase region; sequence GVTLIDPNSI…PGWRKKSGES (205 aa). Arginine 328 and lysine 346 together coordinate UDP-N-acetyl-alpha-D-glucosamine. Histidine 358 (proton acceptor) is an active-site residue. The UDP-N-acetyl-alpha-D-glucosamine site is built by tyrosine 361 and asparagine 372. Acetyl-CoA is bound by residues alanine 375, 381–382, serine 400, alanine 418, and arginine 435; that span reads NY.

It in the N-terminal section; belongs to the N-acetylglucosamine-1-phosphate uridyltransferase family. The protein in the C-terminal section; belongs to the transferase hexapeptide repeat family. As to quaternary structure, homotrimer. Mg(2+) is required as a cofactor.

It is found in the cytoplasm. It carries out the reaction alpha-D-glucosamine 1-phosphate + acetyl-CoA = N-acetyl-alpha-D-glucosamine 1-phosphate + CoA + H(+). The enzyme catalyses N-acetyl-alpha-D-glucosamine 1-phosphate + UTP + H(+) = UDP-N-acetyl-alpha-D-glucosamine + diphosphate. Its pathway is nucleotide-sugar biosynthesis; UDP-N-acetyl-alpha-D-glucosamine biosynthesis; N-acetyl-alpha-D-glucosamine 1-phosphate from alpha-D-glucosamine 6-phosphate (route II): step 2/2. It functions in the pathway nucleotide-sugar biosynthesis; UDP-N-acetyl-alpha-D-glucosamine biosynthesis; UDP-N-acetyl-alpha-D-glucosamine from N-acetyl-alpha-D-glucosamine 1-phosphate: step 1/1. The protein operates within bacterial outer membrane biogenesis; LPS lipid A biosynthesis. Catalyzes the last two sequential reactions in the de novo biosynthetic pathway for UDP-N-acetylglucosamine (UDP-GlcNAc). The C-terminal domain catalyzes the transfer of acetyl group from acetyl coenzyme A to glucosamine-1-phosphate (GlcN-1-P) to produce N-acetylglucosamine-1-phosphate (GlcNAc-1-P), which is converted into UDP-GlcNAc by the transfer of uridine 5-monophosphate (from uridine 5-triphosphate), a reaction catalyzed by the N-terminal domain. The protein is Bifunctional protein GlmU of Trichormus variabilis (strain ATCC 29413 / PCC 7937) (Anabaena variabilis).